A 163-amino-acid chain; its full sequence is Phosphopantetheine adenylyltransferase (163 aa).

Thr-9 is a substrate binding site. Residues 9-10 and His-17 contribute to the ATP site; that span reads TF. Substrate is bound by residues Lys-41, Leu-76, and Arg-90. ATP-binding positions include 91–93, Glu-101, and 126–132; these read GLR and HQAIASR.

This sequence belongs to the bacterial CoaD family. As to quaternary structure, homohexamer. Mg(2+) serves as cofactor.

Its subcellular location is the cytoplasm. The catalysed reaction is (R)-4'-phosphopantetheine + ATP + H(+) = 3'-dephospho-CoA + diphosphate. It functions in the pathway cofactor biosynthesis; coenzyme A biosynthesis; CoA from (R)-pantothenate: step 4/5. Its function is as follows. Reversibly transfers an adenylyl group from ATP to 4'-phosphopantetheine, yielding dephospho-CoA (dPCoA) and pyrophosphate. The chain is Phosphopantetheine adenylyltransferase from Caulobacter vibrioides (strain ATCC 19089 / CIP 103742 / CB 15) (Caulobacter crescentus).